A 412-amino-acid chain; its full sequence is Chorismate synthase (412 aa).

Arginine 40 and arginine 46 together coordinate NADP(+). Residues 135 to 137, 256 to 257, glycine 300, 315 to 319, and arginine 341 each bind FMN; these read RAS, QA, and KPIST. The segment covering 391-404 has biased composition (basic and acidic residues); that stretch reads QREPRQESSDEQPA. The segment at 391–412 is disordered; sequence QREPRQESSDEQPARRAANTAG.

The protein belongs to the chorismate synthase family. Homotetramer. FMNH2 is required as a cofactor.

It catalyses the reaction 5-O-(1-carboxyvinyl)-3-phosphoshikimate = chorismate + phosphate. The protein operates within metabolic intermediate biosynthesis; chorismate biosynthesis; chorismate from D-erythrose 4-phosphate and phosphoenolpyruvate: step 7/7. Catalyzes the anti-1,4-elimination of the C-3 phosphate and the C-6 proR hydrogen from 5-enolpyruvylshikimate-3-phosphate (EPSP) to yield chorismate, which is the branch point compound that serves as the starting substrate for the three terminal pathways of aromatic amino acid biosynthesis. This reaction introduces a second double bond into the aromatic ring system. This chain is Chorismate synthase, found in Mycobacteroides abscessus (strain ATCC 19977 / DSM 44196 / CCUG 20993 / CIP 104536 / JCM 13569 / NCTC 13031 / TMC 1543 / L948) (Mycobacterium abscessus).